A 152-amino-acid chain; its full sequence is Large ribosomal subunit protein bL9 (152 aa).

The protein belongs to the bacterial ribosomal protein bL9 family.

Its function is as follows. Binds to the 23S rRNA. This Coxiella burnetii (strain RSA 331 / Henzerling II) protein is Large ribosomal subunit protein bL9.